Here is a 327-residue protein sequence, read N- to C-terminus: MQNSASEFLKPRLIDVQPVSATQARVAMEPFERGYAYTLGNALRRILLSSMPGFAPTEVSIAGVLHEYSALDGVREDVVDILLNLKGVVFKLHGRDSVLLTLKKEGEGAVRASDIDLPHDVEVVNPDHVICHLAAGGKIDMEIKVEKGRGYQPAPARVKQDDNRQIGTILLDASFSPLRRVSFSVESARVEQRTDLDRLVMDIETNGVIEPEEAVRSAARILIDQLSIFADLQGTTVEVVEERAPQVDPILLRPVDDLELTVRSANCLKAENIYYIGDLIQRTETELLKTPNLGRKSLNEIKEVLASKGLTLGMKLENWPPAGLEKP.

The interval 1 to 233 (MQNSASEFLK…DQLSIFADLQ (233 aa)) is alpha N-terminal domain (alpha-NTD). Residues 247 to 327 (VDPILLRPVD…NWPPAGLEKP (81 aa)) are alpha C-terminal domain (alpha-CTD).

This sequence belongs to the RNA polymerase alpha chain family. Homodimer. The RNAP catalytic core consists of 2 alpha, 1 beta, 1 beta' and 1 omega subunit. When a sigma factor is associated with the core the holoenzyme is formed, which can initiate transcription.

It catalyses the reaction RNA(n) + a ribonucleoside 5'-triphosphate = RNA(n+1) + diphosphate. Functionally, DNA-dependent RNA polymerase catalyzes the transcription of DNA into RNA using the four ribonucleoside triphosphates as substrates. The polypeptide is DNA-directed RNA polymerase subunit alpha (Laribacter hongkongensis (strain HLHK9)).